Here is a 664-residue protein sequence, read N- to C-terminus: uncharacterized protein (664 aa).

A signal peptide spans 1 to 25 (MSWKRYLKWVSFAIIPLLFANTSIK). The chain crosses the membrane as a helical span at residues 625–645 (IIVYLIIGFSVLVLFITVFIY).

Belongs to the MG414/MG415 family.

The protein resides in the cell membrane. This is an uncharacterized protein from Mycoplasma genitalium (strain ATCC 33530 / DSM 19775 / NCTC 10195 / G37) (Mycoplasmoides genitalium).